The sequence spans 1012 residues: Vacuolar protein-sorting protein bro-1 (1012 aa).

Residues 5-407 enclose the BRO1 domain; that stretch reads PMISVPLKAT…ERVETANSEM (403 aa). Positions 301-330 form a coiled coil; that stretch reads ILADATKRHLATVKEKLEELNKENDMIYHQ. The disordered stretch occupies residues 558–578; the sequence is RKSRKSNPNSPATVEPNLLEA. Positions 719 to 775 form a coiled coil; that stretch reads LQSAKNWYKDMRQEAESLEKNVEAFVNNRRAEGAQLLNQIEQDRAANKSSHAALEQE. Disordered stretches follow at residues 784-812 and 827-1012; these read MSMD…SFAP and NFST…SAWK. Over residues 827-842 the composition is skewed to polar residues; it reads NFSTQYPASPPATQVP. A compositionally biased stretch (low complexity) spans 844–857; the sequence is NPGGQQQTPYQQYN. Over residues 892 to 913 the composition is skewed to polar residues; sequence QTSFAQSRPYSLTTYGNPSALN. Positions 914 to 930 are enriched in low complexity; that stretch reads PQGGQPQQSQPGGYVPP. Residues 931 to 945 show a composition bias toward pro residues; that stretch reads GFVPPPPPPGPPPLG. Gly residues predominate over residues 970–985; sequence PGSGQQGPQGQQGGWG.

Belongs to the BRO1 family.

The protein resides in the cytoplasm. The protein localises to the endosome. Involved in concentration and sorting of cargo proteins of the multivesicular body (MVB) for incorporation into intralumenal vesicles. This is Vacuolar protein-sorting protein bro-1 (bro-1) from Neurospora crassa (strain ATCC 24698 / 74-OR23-1A / CBS 708.71 / DSM 1257 / FGSC 987).